The following is a 75-amino-acid chain: Bacteriocin lactococcin-A (75 aa).

Positions 1-21 (MKNQLNFNIVSDEELSEANGG) are excised as a propeptide. Residues 30–52 (AAGDLYYNTNTHKYVYQQTQNAF) form a helical membrane-spanning segment.

Its subcellular location is the secreted. The protein localises to the host cell membrane. In terms of biological role, kills Lactococci. This is Bacteriocin lactococcin-A (lcnA) from Lactococcus lactis subsp. cremoris (Streptococcus cremoris).